The chain runs to 246 residues: Electron transfer flavoprotein beta subunit lysine methyltransferase (246 aa).

The protein belongs to the methyltransferase superfamily. ETFBKMT family.

It is found in the cytoplasm. The protein resides in the mitochondrion matrix. The enzyme catalyses L-lysyl-[protein] + 3 S-adenosyl-L-methionine = N(6),N(6),N(6)-trimethyl-L-lysyl-[protein] + 3 S-adenosyl-L-homocysteine + 3 H(+). Its function is as follows. Protein-lysine methyltransferase that selectively trimethylates the flavoprotein ETFB in mitochondria. Thereby, may negatively regulate the function of ETFB in electron transfer from Acyl-CoA dehydrogenases to the main respiratory chain. The protein is Electron transfer flavoprotein beta subunit lysine methyltransferase (etfbkmt) of Xenopus laevis (African clawed frog).